Consider the following 445-residue polypeptide: MVRMEDIISLAKRKGFVFQSSEVYGGLSGAWDYGPLGVELKKNIKKEWWKSMVYLHENIVGLDSAIFMRPEIWRASGHVDGFSDSMVDCKDCKSRFRADFIDLSKNCPNCKVGNNFTSPRSFNLMFKTHIGVVEDSSSEVYLRPETAQGIFVNFRNVLDSSRLKIPFGIAQVGKAFRNEIVTKNFIFRTCEFEQMEMQFFVHPKQIDEWFCYWQQNRMNFFIETLKISPDRLRFKAHDSTQLAHYAKAAFDIEYEFPFGFQEVEGIHNRGNYDLTQHAKFSNKPKVFEYHDLLTKEKYVPYVIETSAGLTRSVLMTLCDAYSEEELSDGDKRIVLRLHPKLAPYKIAIFPLVKKVELTEIARRIYMELCDDFHIFYDDSGTIGKRYRRQDEIGTPYCVTIDYNTIEDETVTVRERNNMTQKRIFINDLYSYIKTEILNYKEDFNK.

Substrate contacts are provided by Arg97 and Glu145. ATP contacts are provided by residues 177–179 (RNE), 187–192 (FRTCEF), 262–263 (EV), and 308–311 (GLTR). 192 to 196 (FEQME) lines the substrate pocket. 304–308 (ETSAG) contributes to the substrate binding site.

This sequence belongs to the class-II aminoacyl-tRNA synthetase family. In terms of assembly, homodimer.

The protein localises to the cytoplasm. The enzyme catalyses tRNA(Gly) + glycine + ATP = glycyl-tRNA(Gly) + AMP + diphosphate. Its function is as follows. Catalyzes the attachment of glycine to tRNA(Gly). The polypeptide is Glycine--tRNA ligase (Borreliella burgdorferi (strain ZS7) (Borrelia burgdorferi)).